The primary structure comprises 354 residues: UDP-3-O-acylglucosamine N-acyltransferase (354 aa).

His250 acts as the Proton acceptor in catalysis.

This sequence belongs to the transferase hexapeptide repeat family. LpxD subfamily. In terms of assembly, homotrimer.

The catalysed reaction is a UDP-3-O-[(3R)-3-hydroxyacyl]-alpha-D-glucosamine + a (3R)-hydroxyacyl-[ACP] = a UDP-2-N,3-O-bis[(3R)-3-hydroxyacyl]-alpha-D-glucosamine + holo-[ACP] + H(+). The protein operates within bacterial outer membrane biogenesis; LPS lipid A biosynthesis. In terms of biological role, catalyzes the N-acylation of UDP-3-O-acylglucosamine using 3-hydroxyacyl-ACP as the acyl donor. Is involved in the biosynthesis of lipid A, a phosphorylated glycolipid that anchors the lipopolysaccharide to the outer membrane of the cell. This chain is UDP-3-O-acylglucosamine N-acyltransferase, found in Methylococcus capsulatus (strain ATCC 33009 / NCIMB 11132 / Bath).